The following is a 424-amino-acid chain: Serine incorporator 5 (424 aa).

Over 1–6 (MYALYF) the chain is Extracellular. The helical transmembrane segment at 7–23 (ILVVVLCCIMMSTTVAH) threads the bilayer. The Cytoplasmic segment spans residues 24–52 (KMKEHIPFFEDMCKGIKAGDTCEKLVGYS). The chain crosses the membrane as a helical span at residues 53-73 (AVYRVCFGMACFFFIFCLLTL). Residues 74–87 (KINNSKSCRAHIHN) are Extracellular-facing. A glycan (N-linked (GlcNAc...) asparagine) is linked at N76. A helical transmembrane segment spans residues 88–108 (GFWFFKLLLLGAMCSGAFFIP). Topologically, residues 109–119 (DQDTFLNAWRY) are cytoplasmic. A helical transmembrane segment spans residues 120–140 (VGAVGGFLFIGIQLLLLVEFA). Over 141–161 (HKWNKNWTAGTASNKLWYASL) the chain is Extracellular. A glycan (N-linked (GlcNAc...) asparagine) is linked at N146. A helical membrane pass occupies residues 162–182 (ALVTLIMYSIATGGLVLMAVF). The Cytoplasmic segment spans residues 183 to 193 (YTQKDGCMENK). The helical transmembrane segment at 194–214 (ILLGVNGGLCVLISLVAISPC) threads the bilayer. The Extracellular portion of the chain corresponds to 215-221 (VQNRQPH). A helical membrane pass occupies residues 222-242 (SGLLQSGVISCYVTYLTFSAL). Over 243–274 (SSKPAEVVLDEHGKNVTICVPDFGQDLYRDEN) the chain is Cytoplasmic. Residues 275-295 (LVTILGTSLLIGCILYSCLTS) traverse the membrane as a helical segment. Residues 296–348 (TTRSSSDALQGRYAAPELEIARCCFCFSPGGEDTEEQQQGKEGPRVIYDEKKG) are Extracellular-facing. Residues 349 to 369 (TVYIYSYFHFVFFLASLYVMM) form a helical membrane-spanning segment. Residues 370–391 (TVTNWFNYESANIESFFSGSWS) lie on the Cytoplasmic side of the membrane. Residues 392–412 (IFWVKMASCWICVLLYLCTLV) form a helical membrane-spanning segment. The Extracellular segment spans residues 413 to 424 (APLCCPTREFSV).

Belongs to the TDE1 family.

It localises to the cell membrane. It catalyses the reaction a 1,2-diacyl-sn-glycero-3-phospho-L-serine(in) = a 1,2-diacyl-sn-glycero-3-phospho-L-serine(out). The catalysed reaction is a 1,2-diacyl-sn-glycero-3-phosphocholine(in) = a 1,2-diacyl-sn-glycero-3-phosphocholine(out). The enzyme catalyses a 1,2-diacyl-sn-glycero-3-phosphoethanolamine(in) = a 1,2-diacyl-sn-glycero-3-phosphoethanolamine(out). In terms of biological role, restriction factor required to restrict infectivity of gammaretroviruses: acts by inhibiting an early step of viral infection. Impairs the penetration of the viral particle into the cytoplasm. Non-ATP-dependent, non-specific lipid transporter for phosphatidylserine, phosphatidylcholine, and phosphatidylethanolamine. Functions as a scramblase that flips lipids in both directions across the membrane. Phospholipid scrambling results in gammaretroviral surface exposure of phosphatidylserine and loss of membrane asymmetry, which leads to loss of infectivity. Enhances the incorporation of serine into phosphatidylserine and sphingolipids. May play a role in providing serine molecules for the formation of myelin glycosphingolipids in oligodendrocytes. The sequence is that of Serine incorporator 5 (SERINC5) from Macaca fascicularis (Crab-eating macaque).